The primary structure comprises 146 residues: Large ribosomal subunit protein uL15 (146 aa).

Over residues 1–13 (MKLHELKAAEGSR) the composition is skewed to basic and acidic residues. Residues 1 to 56 (MKLHELKAAEGSRRVRNRVGRGAGSGNGKTSGRGQKGQKARSGGGVRPGFEGGQLP) form a disordered region. Composition is skewed to gly residues over residues 21 to 35 (RGAG…GRGQ) and 42 to 52 (SGGGVRPGFEG).

Belongs to the universal ribosomal protein uL15 family. As to quaternary structure, part of the 50S ribosomal subunit.

Functionally, binds to the 23S rRNA. This is Large ribosomal subunit protein uL15 from Staphylococcus haemolyticus (strain JCSC1435).